A 353-amino-acid chain; its full sequence is Delta-aminolevulinic acid dehydratase (353 aa).

Residue Lys221 is the Schiff-base intermediate with substrate of the active site. Positions 231 and 244 each coordinate 5-aminolevulinate. Glu260 lines the Mg(2+) pocket. The active-site Schiff-base intermediate with substrate is Lys275. Positions 301 and 340 each coordinate 5-aminolevulinate.

This sequence belongs to the ALAD family. Homooctamer. The cofactor is Mg(2+).

The enzyme catalyses 2 5-aminolevulinate = porphobilinogen + 2 H2O + H(+). Its pathway is porphyrin-containing compound metabolism; protoporphyrin-IX biosynthesis; coproporphyrinogen-III from 5-aminolevulinate: step 1/4. Its function is as follows. Catalyzes an early step in the biosynthesis of tetrapyrroles. Binds two molecules of 5-aminolevulinate per subunit, each at a distinct site, and catalyzes their condensation to form porphobilinogen. Required for nodule development. The sequence is that of Delta-aminolevulinic acid dehydratase (hemB) from Bradyrhizobium diazoefficiens (strain JCM 10833 / BCRC 13528 / IAM 13628 / NBRC 14792 / USDA 110).